A 466-amino-acid polypeptide reads, in one-letter code: FAD-dependent monooxygenase dpfgE (466 aa).

A signal peptide spans 1 to 23; sequence MSQKPFRVIIVGGSVTGLTLAHS. FAD-binding residues include Glu35, Gly49, and Arg108. Asn128 and Asn192 each carry an N-linked (GlcNAc...) asparagine glycan. 2 residues coordinate FAD: Asp312 and Ala325. N-linked (GlcNAc...) asparagine glycosylation is present at Asn376. The chain crosses the membrane as a helical span at residues 443–465; that stretch reads GVVRNVFFLLAATVIVAWVCRLW.

The protein belongs to the paxM FAD-dependent monooxygenase family. Requires FAD as cofactor.

The protein resides in the membrane. The protein operates within secondary metabolite biosynthesis; terpenoid biosynthesis. In terms of biological role, FAD-dependent monooxygenase; part of the gene cluster that mediates the biosynthesis of diterpenoid pyrones. The first step of the pathway is the synthesis of the alpha-pyrone moiety by the polyketide synthase dpfgA via condensation of one acetyl-CoA starter unit with 3 malonyl-CoA units and 2 methylations. The alpha-pyrone is then combined with geranylgeranyl pyrophosphate (GGPP) formed by the GGPP synthase dpfgD through the action of the prenyltransferase dpfgC to yield a linear alpha-pyrone diterpenoid. Subsequent steps in the diterpenoid pyrone biosynthetic pathway involve the decalin core formation, which is initiated by the epoxidation of the C10-C11 olefin by the FAD-dependent oxidoreductase dpfgE, and is followed by a cyclization cascade catalyzed by the terpene cyclase dpfgB. The short chain dehydrogenase/reductase dpfgG then oxidizes the 8S hydroxy group to a ketone and the short chain dehydrogenase/reductase dpfgH reduces the ketone to the 8R hydroxy group to yield higginsianin B. Higginsianin B is further methylated by the methyltransferase dpfgI to produce the intermediate named FDDP B. The cytochrome P450 monooxygenase dfgpJ then catalyzes a three-step oxidation at C-27 to generate a carboxylic acid as well as C-26 hydroxylation. Finally, methyltransferase dpfgK methylates the carboxylic acid generated by dpfgJ, yielding the final diterpenoid pyrones from the pathway which were named FDDP D and FDDP E. This Gibberella zeae (strain ATCC MYA-4620 / CBS 123657 / FGSC 9075 / NRRL 31084 / PH-1) (Wheat head blight fungus) protein is FAD-dependent monooxygenase dpfgE.